The sequence spans 328 residues: MLEDYYPSTTSYYHGGIDDDLYTAKWGMVMTFLDLNDSSLTPFEGTHFALIGFKSDKGVYINNGRVGAVESPAAIRTQLAKFPWHLGNQVMVYDVGNIDGPNRSLEQLQNSLSKAIKRMCDLNLKPIVLGGGHETAYGHYLGLRQSLSPSDDLAVINMDAHFDLRPYDQTGPNSGTGFRQMFDDAVADKRLFKYFVLGIQEHNNNLFLFDFVAKSKGIQFLTGQDIYQMGHQKVCRAIDRFLEGQERVYLTIDMDCFSVGAAPGVSAIQSLGVDPNLAVLVLQHIAASGKLVGFDVVEVSPPHDIDNHTANLAATFIFYLVQIMAQHN.

Mn(2+) is bound by residues His133, Asp159, His161, Asp163, Asp253, and Asp255.

It belongs to the arginase family. The cofactor is Mn(2+).

The enzyme catalyses N-formimidoyl-L-glutamate + H2O = formamide + L-glutamate. The protein operates within amino-acid degradation; L-histidine degradation into L-glutamate; L-glutamate from N-formimidoyl-L-glutamate (hydrolase route): step 1/1. Functionally, catalyzes the conversion of N-formimidoyl-L-glutamate to L-glutamate and formamide. This Streptococcus pyogenes serotype M28 (strain MGAS6180) protein is Formimidoylglutamase.